Here is a 319-residue protein sequence, read N- to C-terminus: MAIKRTKAEKKIAYDKKLCSLLDEYTKVLIALADNVGSKQLQDIRRGLRGDSVVLMGKNTLIRRCIKVYAEKTGNHTFDPLMDLLVGNVGLIFTKGDLKEVREEVAKYKVGAPARVGLVAPVDVVVPPGNTGLDPSQTSFFQVLNIPTKINKGTVEIITPVELIKKGEKVGSSESALLAKLGIRPFSYGLQVTSVYEDGSVFSPEVLDLSEEDLIEKFATGVSMVASLSLAISYPTLAAVPHMFINGYKNVLAVAVETDYSYPHADKIKEYLKDPSKFAVAAPVAAGDSGASAAPKEEEKAAEPEEESDEEMGFSLFDD.

The interval 286-319 (AGDSGASAAPKEEEKAAEPEEESDEEMGFSLFDD) is disordered. A compositionally biased stretch (acidic residues) spans 304 to 319 (PEEESDEEMGFSLFDD).

Belongs to the universal ribosomal protein uL10 family. As to quaternary structure, P0 forms a pentameric complex by interaction with dimers of P1 and P2. In terms of processing, phosphorylated.

Ribosomal protein P0 is the functional equivalent of E.coli protein L10. The sequence is that of Large ribosomal subunit protein uL10 (RP-P0) from Zea mays (Maize).